A 497-amino-acid chain; its full sequence is Trichoplein keratin filament-binding protein (497 aa).

Coiled coils occupy residues 67-140, 166-271, and 327-479; these read HCEK…LLYE, ATQK…ELGR, and MKQV…AKTM. The interaction with keratin proteins stretch occupies residues 72–457; sequence KEEKRKILEL…WEAARQEEEE (386 aa). Residues 167–188 form a disordered region; sequence TQKEEKKQQEATEKQENKRLEN. A compositionally biased stretch (basic and acidic residues) spans 168 to 188; the sequence is QKEEKKQQEATEKQENKRLEN. The tract at residues 258–424 is trichohyalin/plectin homology domain; that stretch reads RQMAALRRKT…KQLAQRAKEE (167 aa). The disordered stretch occupies residues 441 to 497; sequence AERQGQEWEAARQEEEEEEEARQAEEHSNALLQQEAKTMAEKGYQPKLHGHLRIAWD. Residues 444–453 show a composition bias toward basic and acidic residues; the sequence is QGQEWEAARQ. Basic residues predominate over residues 488–497; it reads LHGHLRIAWD.

Belongs to the TCHP family. Interacts specifically with keratin proteins including, KRT5, KRT6A, KRT8, KRT14, KRT16 and KRT18. Interacts with KCTD17. In terms of processing, ubiquitinated. Ubiquitination by the BCR(KCTD17) E3 ubiquitin ligase complex results in proteasomal degradation, and induces ciliogenesis. Expressed in all tissues examined, including brain, liver, small intestine, large intestine, lung and heart. Found concentrated in tubular structures within hepatocytes, and in the apical cortical region and desmosomes of the apical junctional domain in enterocytes of the small intestine. In the hair follicle, localized at the outer root sheath. Also expressed in blood vessels (at protein level).

Its subcellular location is the cytoplasm. It localises to the cytoskeleton. It is found in the cell membrane. The protein resides in the mitochondrion. The protein localises to the microtubule organizing center. Its subcellular location is the centrosome. Tumor suppressor which has the ability to inhibit cell growth and be pro-apoptotic during cell stress. May act as a 'capping' or 'branching' protein for keratin filaments in the cell periphery. May regulate K8/K18 filament and desmosome organization mainly at the apical or peripheral regions of simple epithelial cells. Is a negative regulator of ciliogenesis. This is Trichoplein keratin filament-binding protein from Mus musculus (Mouse).